Here is a 230-residue protein sequence, read N- to C-terminus: 2,3-bisphosphoglycerate-dependent phosphoglycerate mutase 1 (230 aa).

Substrate-binding positions include 8 to 15 (RHGQSEWN), 21 to 22 (TG), arginine 60, 87 to 90 (ERHY), lysine 98, 114 to 115 (RR), and 183 to 184 (GN). The active-site Tele-phosphohistidine intermediate is the histidine 9. Glutamate 87 (proton donor/acceptor) is an active-site residue.

Belongs to the phosphoglycerate mutase family. BPG-dependent PGAM subfamily.

It carries out the reaction (2R)-2-phosphoglycerate = (2R)-3-phosphoglycerate. Its pathway is carbohydrate degradation; glycolysis; pyruvate from D-glyceraldehyde 3-phosphate: step 3/5. Functionally, catalyzes the interconversion of 2-phosphoglycerate and 3-phosphoglycerate. The polypeptide is 2,3-bisphosphoglycerate-dependent phosphoglycerate mutase 1 (Lactobacillus johnsonii (strain CNCM I-12250 / La1 / NCC 533)).